A 240-amino-acid chain; its full sequence is 1-(5-phosphoribosyl)-5-[(5-phosphoribosylamino)methylideneamino] imidazole-4-carboxamide isomerase (240 aa).

The Proton acceptor role is filled by aspartate 8. Aspartate 129 acts as the Proton donor in catalysis.

The protein belongs to the HisA/HisF family.

The protein resides in the cytoplasm. It catalyses the reaction 1-(5-phospho-beta-D-ribosyl)-5-[(5-phospho-beta-D-ribosylamino)methylideneamino]imidazole-4-carboxamide = 5-[(5-phospho-1-deoxy-D-ribulos-1-ylimino)methylamino]-1-(5-phospho-beta-D-ribosyl)imidazole-4-carboxamide. It participates in amino-acid biosynthesis; L-histidine biosynthesis; L-histidine from 5-phospho-alpha-D-ribose 1-diphosphate: step 4/9. The protein is 1-(5-phosphoribosyl)-5-[(5-phosphoribosylamino)methylideneamino] imidazole-4-carboxamide isomerase of Herpetosiphon aurantiacus (strain ATCC 23779 / DSM 785 / 114-95).